Reading from the N-terminus, the 100-residue chain is MAKVNIKPLEDKILVQANEAETTTASGLVIPDTAKEKPQEGTVVAVGPGRWDEDGEKRIPLDVAEGDTVIYSKYGGTEIKYNGEEYLILSARDVLAVVSK.

It belongs to the GroES chaperonin family. Heptamer of 7 subunits arranged in a ring. Interacts with the chaperonin GroEL.

The protein localises to the cytoplasm. Its function is as follows. Together with the chaperonin GroEL, plays an essential role in assisting protein folding. The GroEL-GroES system forms a nano-cage that allows encapsulation of the non-native substrate proteins and provides a physical environment optimized to promote and accelerate protein folding. GroES binds to the apical surface of the GroEL ring, thereby capping the opening of the GroEL channel. In Mycobacterium tuberculosis (strain CDC 1551 / Oshkosh), this protein is Co-chaperonin GroES.